The following is a 212-amino-acid chain: Uridine kinase (212 aa).

13 to 20 (GGSGSGKT) serves as a coordination point for ATP.

Belongs to the uridine kinase family.

The protein resides in the cytoplasm. The catalysed reaction is uridine + ATP = UMP + ADP + H(+). It carries out the reaction cytidine + ATP = CMP + ADP + H(+). Its pathway is pyrimidine metabolism; CTP biosynthesis via salvage pathway; CTP from cytidine: step 1/3. The protein operates within pyrimidine metabolism; UMP biosynthesis via salvage pathway; UMP from uridine: step 1/1. In Bacillus thuringiensis (strain Al Hakam), this protein is Uridine kinase.